The sequence spans 76 residues: Large ribosomal subunit protein uL29 (76 aa).

Belongs to the universal ribosomal protein uL29 family.

This is Large ribosomal subunit protein uL29 from Corynebacterium kroppenstedtii (strain DSM 44385 / JCM 11950 / CIP 105744 / CCUG 35717).